Reading from the N-terminus, the 136-residue chain is Glycine-rich RNA-binding protein 4, mitochondrial (136 aa).

The N-terminal 33 residues, 1–33, are a transit peptide targeting the mitochondrion; that stretch reads MAFCNKLSGILRQGVSQSSNGPVTSMLGSLRYM. The RRM domain maps to 35-113; it reads SKLFVGGLSW…RQIRVNLATE (79 aa). Phosphoserine is present on S43. The segment at 113–136 is disordered; sequence ERSSAPRSSFGGGGGYGGGGGGGY. The span at 122–136 shows a compositional bias: gly residues; sequence FGGGGGYGGGGGGGY. The glycine-rich (GR) required for cell-to-cell movement stretch occupies residues 123-135; that stretch reads GGGGGYGGGGGGG.

The protein belongs to the GR-RBP family. In terms of assembly, binds to small phloem-mobile single-stranded RNAs (ss-sRNA, e.g. small interfering RNA (siRNA) and microRNA (miRNA)) in the phloeme exudate, including viral-derived sRNA (vsiRNA). Abundantly expressed in young plants, root tips, and flowers, but weakly in mature leaves and stems, implying highly expression in actively proliferating organs.

It is found in the mitochondrion. Its subcellular location is the secreted. Functionally, possibly has a role in RNA transcription or processing during stress. Binds sequence non-specifically to RNAs and DNAs. Mediates cell-to-cell trafficking of RNA interference (RNAi) signals (small RNAs (sRNA), e.g. small interfering RNA (siRNA) and microRNA (miRNA)) which regulate growth and development, as well as responses to environmental inputs, including pathogen attack; can compromise zucchini yellow mosaic virus (ZYMV) and tobacco rattle virus (TRV) infections at the early stage. In Arabidopsis thaliana (Mouse-ear cress), this protein is Glycine-rich RNA-binding protein 4, mitochondrial.